A 464-amino-acid chain; its full sequence is Methionine aminopeptidase 2 (464 aa).

Residues 1–86 form a disordered region; it reads MGSKTPGNHR…RKKKKKNTKE (86 aa). Positions 43 to 54 are enriched in acidic residues; the sequence is GESEGGEDEDDD. Residues 72-83 show a composition bias toward basic residues; sequence KRNKRRKKKKKN. Histidine 216 is a binding site for substrate. Positions 237, 248, and 317 each coordinate a divalent metal cation. Histidine 325 contributes to the substrate binding site. The a divalent metal cation site is built by glutamate 350 and glutamate 445.

Belongs to the peptidase M24A family. Methionine aminopeptidase eukaryotic type 2 subfamily. Co(2+) is required as a cofactor. Zn(2+) serves as cofactor. Requires Mn(2+) as cofactor. It depends on Fe(2+) as a cofactor.

It is found in the cytoplasm. The catalysed reaction is Release of N-terminal amino acids, preferentially methionine, from peptides and arylamides.. Cotranslationally removes the N-terminal methionine from nascent proteins. The N-terminal methionine is often cleaved when the second residue in the primary sequence is small and uncharged (Met-Ala-, Cys, Gly, Pro, Ser, Thr, or Val). The chain is Methionine aminopeptidase 2 from Ajellomyces capsulatus (strain NAm1 / WU24) (Darling's disease fungus).